The chain runs to 102 residues: Large ribosomal subunit protein bL21 (102 aa).

Belongs to the bacterial ribosomal protein bL21 family. As to quaternary structure, part of the 50S ribosomal subunit. Contacts protein L20.

Functionally, this protein binds to 23S rRNA in the presence of protein L20. The chain is Large ribosomal subunit protein bL21 from Pseudarthrobacter chlorophenolicus (strain ATCC 700700 / DSM 12829 / CIP 107037 / JCM 12360 / KCTC 9906 / NCIMB 13794 / A6) (Arthrobacter chlorophenolicus).